We begin with the raw amino-acid sequence, 355 residues long: Putative testis-specific Y-encoded-like protein 3 (355 aa).

The segment at 1–131 (MADKRAGTPE…GEEKQEVAAE (131 aa)) is disordered. Positions 93–128 (ASEKAEDANKEEGAIFKKEPAEEVEKQQEGEEKQEV) are enriched in basic and acidic residues.

The protein belongs to the nucleosome assembly protein (NAP) family.

In Homo sapiens (Human), this protein is Putative testis-specific Y-encoded-like protein 3 (TSPY26P).